A 103-amino-acid chain; its full sequence is Small ribosomal subunit protein uS10 (103 aa).

The protein belongs to the universal ribosomal protein uS10 family. Part of the 30S ribosomal subunit.

In terms of biological role, involved in the binding of tRNA to the ribosomes. The polypeptide is Small ribosomal subunit protein uS10 (Chlorobium chlorochromatii (strain CaD3)).